A 128-amino-acid chain; its full sequence is Protein ripply2 (128 aa).

Residues 1–64 are disordered; sequence MDTTESAESA…ALPSGPGMAE (64 aa). The span at 17-28 shows a compositional bias: low complexity; sequence PSRSRCPPSAQP. The WRPW motif motif lies at 34 to 37; that stretch reads WRPW. The ripply homology domain stretch occupies residues 74 to 109; the sequence is HPVRLFWPKSKCYDYLYQEAETLLKNFPIQATISFY.

It belongs to the ripply family. As to expression, expressed in the embryonic anterior presomitic mesoderm. First expressed in S-I at 8.5 dpc, where expression is maintained until 13.5 dpc, with an additional stripe of expression sometimes seen in the rostral part of S0 and S-I.

It localises to the nucleus. Its function is as follows. Plays a role in somitogenesis. Required for somite segregation and establishment of rostrocaudal polarity in somites. The polypeptide is Protein ripply2 (Mus musculus (Mouse)).